A 213-amino-acid chain; its full sequence is Transcriptional regulatory protein YdfI (213 aa).

The region spanning 3–118 is the Response regulatory domain; sequence KVLIVDDHLV…TLFHTMDAAI (116 aa). Residue D54 is modified to 4-aspartylphosphate. The region spanning 142-207 is the HTH luxR-type domain; sequence KQRNETQLTE…EAVTIAMQKG (66 aa). The segment at residues 166 to 185 is a DNA-binding region (H-T-H motif); it reads SKAIAFDLGVSERTVKSRLT.

In terms of processing, phosphorylated by YdfH.

It is found in the cytoplasm. Its function is as follows. Member of the two-component regulatory system YdfH/YdfI. Regulates the transcription of ydfJ by binding to its promoter region. The chain is Transcriptional regulatory protein YdfI (ydfI) from Bacillus subtilis (strain 168).